Reading from the N-terminus, the 206-residue chain is Guanylate kinase (206 aa).

In terms of domain architecture, Guanylate kinase-like spans 6–184 (GNLFILSAPS…ALTDIETIVM (179 aa)). Residue 13–20 (APSGAGKS) participates in ATP binding.

Belongs to the guanylate kinase family.

It localises to the cytoplasm. The catalysed reaction is GMP + ATP = GDP + ADP. In terms of biological role, essential for recycling GMP and indirectly, cGMP. This Pseudoalteromonas translucida (strain TAC 125) protein is Guanylate kinase.